We begin with the raw amino-acid sequence, 248 residues long: Uridylate kinase (248 aa).

15-18 provides a ligand contact to ATP; it reads KLSG. Positions 23 to 28 are involved in allosteric activation by GTP; the sequence is GAEGFG. Position 57 (Gly-57) interacts with UMP. Positions 58 and 62 each coordinate ATP. UMP contacts are provided by residues Asp-77 and 138–145; that span reads TGNPFFTT. Residues Thr-165, Tyr-171, and Asp-174 each contribute to the ATP site.

It belongs to the UMP kinase family. As to quaternary structure, homohexamer.

The protein localises to the cytoplasm. It catalyses the reaction UMP + ATP = UDP + ADP. Its pathway is pyrimidine metabolism; CTP biosynthesis via de novo pathway; UDP from UMP (UMPK route): step 1/1. With respect to regulation, allosterically activated by GTP. Inhibited by UTP. Functionally, catalyzes the reversible phosphorylation of UMP to UDP. This is Uridylate kinase from Yersinia enterocolitica serotype O:8 / biotype 1B (strain NCTC 13174 / 8081).